Consider the following 283-residue polypeptide: N-terminal Xaa-Pro-Lys N-methyltransferase 2 (283 aa).

S-adenosyl-L-methionine is bound by residues Gly-124, Arg-129, Asp-146, 174-175 (LQ), Gln-190, and His-195.

Belongs to the methyltransferase superfamily. NTM1 family.

The protein resides in the nucleus. The enzyme catalyses N-terminal L-alanyl-L-prolyl-L-lysyl-[protein] + S-adenosyl-L-methionine = N-terminal N-methyl-L-alanyl-L-prolyl-L-lysyl-[protein] + S-adenosyl-L-homocysteine + H(+). The catalysed reaction is N-terminal L-prolyl-L-prolyl-L-lysyl-[protein] + S-adenosyl-L-methionine = N-terminal N-methyl-L-prolyl-L-prolyl-L-lysyl-[protein] + S-adenosyl-L-homocysteine + H(+). It catalyses the reaction N-terminal L-seryl-L-prolyl-L-lysyl-[protein] + S-adenosyl-L-methionine = N-terminal N-methyl-L-seryl-L-prolyl-L-lysyl-[protein] + S-adenosyl-L-homocysteine + H(+). Alpha N-methyltransferase that methylates the N-terminus of target proteins containing the N-terminal motif [Ala/Pro/Ser]-Pro-Lys when the initiator Met is cleaved. Specifically catalyzes monomethylation of exposed alpha-amino group of Ala or Ser residue in the [Ala/Ser]-Pro-Lys motif and Pro in the Pro-Pro-Lys motif. Predominantly functions as a mono-methyltransferase but is also able to di-/tri-methylate the GPKRIA peptide and di-methylate the PPKRIA peptide (in vitro). May activate NTMT1 by priming its substrates for trimethylation. This chain is N-terminal Xaa-Pro-Lys N-methyltransferase 2, found in Homo sapiens (Human).